Here is a 640-residue protein sequence, read N- to C-terminus: tRNA uridine 5-carboxymethylaminomethyl modification enzyme MnmG (640 aa).

Residue 9-14 participates in FAD binding; that stretch reads GGGHAG. Residue 289–303 participates in NAD(+) binding; the sequence is GPRYCPSIEDKINKF.

It belongs to the MnmG family. As to quaternary structure, homodimer. Heterotetramer of two MnmE and two MnmG subunits. The cofactor is FAD.

Its subcellular location is the cytoplasm. Functionally, NAD-binding protein involved in the addition of a carboxymethylaminomethyl (cmnm) group at the wobble position (U34) of certain tRNAs, forming tRNA-cmnm(5)s(2)U34. This Campylobacter hominis (strain ATCC BAA-381 / DSM 21671 / CCUG 45161 / LMG 19568 / NCTC 13146 / CH001A) protein is tRNA uridine 5-carboxymethylaminomethyl modification enzyme MnmG.